The chain runs to 173 residues: Transcriptional repressor NrdR (173 aa).

Residues 3 to 34 fold into a zinc finger; sequence CPFCQHADTRVIDSRVSEDGATIRRRRECEAC. The 91-residue stretch at 49–139 folds into the ATP-cone domain; it reads PAIVKSDGTR…VYRSFEDVAD (91 aa).

This sequence belongs to the NrdR family. It depends on Zn(2+) as a cofactor.

In terms of biological role, negatively regulates transcription of bacterial ribonucleotide reductase nrd genes and operons by binding to NrdR-boxes. The polypeptide is Transcriptional repressor NrdR (Stenotrophomonas maltophilia (strain R551-3)).